The chain runs to 145 residues: Ribosomal RNA large subunit methyltransferase H (145 aa).

Residues Leu64, Gly93, and 112 to 117 (LSPLTF) contribute to the S-adenosyl-L-methionine site.

This sequence belongs to the RNA methyltransferase RlmH family. Homodimer.

It is found in the cytoplasm. It carries out the reaction pseudouridine(1915) in 23S rRNA + S-adenosyl-L-methionine = N(3)-methylpseudouridine(1915) in 23S rRNA + S-adenosyl-L-homocysteine + H(+). Its function is as follows. Specifically methylates the pseudouridine at position 1915 (m3Psi1915) in 23S rRNA. The polypeptide is Ribosomal RNA large subunit methyltransferase H (Prochlorococcus marinus (strain NATL2A)).